The chain runs to 308 residues: Aspartate carbamoyltransferase catalytic subunit (308 aa).

Positions 59 and 60 each coordinate carbamoyl phosphate. Residue lysine 87 participates in L-aspartate binding. Arginine 109, histidine 137, and glutamine 140 together coordinate carbamoyl phosphate. Positions 170 and 224 each coordinate L-aspartate. Carbamoyl phosphate contacts are provided by glycine 265 and proline 266.

It belongs to the aspartate/ornithine carbamoyltransferase superfamily. ATCase family. In terms of assembly, heterododecamer (2C3:3R2) of six catalytic PyrB chains organized as two trimers (C3), and six regulatory PyrI chains organized as three dimers (R2).

The catalysed reaction is carbamoyl phosphate + L-aspartate = N-carbamoyl-L-aspartate + phosphate + H(+). The protein operates within pyrimidine metabolism; UMP biosynthesis via de novo pathway; (S)-dihydroorotate from bicarbonate: step 2/3. Catalyzes the condensation of carbamoyl phosphate and aspartate to form carbamoyl aspartate and inorganic phosphate, the committed step in the de novo pyrimidine nucleotide biosynthesis pathway. In Flavobacterium psychrophilum (strain ATCC 49511 / DSM 21280 / CIP 103535 / JIP02/86), this protein is Aspartate carbamoyltransferase catalytic subunit.